A 124-amino-acid chain; its full sequence is S-adenosylmethionine decarboxylase proenzyme (124 aa).

Residue serine 63 is the Schiff-base intermediate with substrate; via pyruvic acid of the active site. Serine 63 carries the pyruvic acid (Ser); by autocatalysis modification. Histidine 68 acts as the Proton acceptor; for processing activity in catalysis. The active-site Proton donor; for catalytic activity is the cysteine 83.

It belongs to the prokaryotic AdoMetDC family. Type 1 subfamily. In terms of assembly, heterotetramer of two alpha and two beta chains arranged as a dimer of alpha/beta heterodimers. Pyruvate serves as cofactor. In terms of processing, is synthesized initially as an inactive proenzyme. Formation of the active enzyme involves a self-maturation process in which the active site pyruvoyl group is generated from an internal serine residue via an autocatalytic post-translational modification. Two non-identical subunits are generated from the proenzyme in this reaction, and the pyruvate is formed at the N-terminus of the alpha chain, which is derived from the carboxyl end of the proenzyme. The post-translation cleavage follows an unusual pathway, termed non-hydrolytic serinolysis, in which the side chain hydroxyl group of the serine supplies its oxygen atom to form the C-terminus of the beta chain, while the remainder of the serine residue undergoes an oxidative deamination to produce ammonia and the pyruvoyl group blocking the N-terminus of the alpha chain.

The catalysed reaction is S-adenosyl-L-methionine + H(+) = S-adenosyl 3-(methylsulfanyl)propylamine + CO2. Its pathway is amine and polyamine biosynthesis; S-adenosylmethioninamine biosynthesis; S-adenosylmethioninamine from S-adenosyl-L-methionine: step 1/1. Its function is as follows. Catalyzes the decarboxylation of S-adenosylmethionine to S-adenosylmethioninamine (dcAdoMet), the propylamine donor required for the synthesis of the polyamines spermine and spermidine from the diamine putrescine. The chain is S-adenosylmethionine decarboxylase proenzyme from Geobacillus sp. (strain WCH70).